Reading from the N-terminus, the 622-residue chain is Elongation factor 4 (622 aa).

The tr-type G domain maps to 17 to 201 (ALIRNFCIIA…KVVAEVPAPV (185 aa)). GTP-binding positions include 29–34 (DHGKST) and 148–151 (NKID).

Belongs to the TRAFAC class translation factor GTPase superfamily. Classic translation factor GTPase family. LepA subfamily.

It localises to the cell membrane. It catalyses the reaction GTP + H2O = GDP + phosphate + H(+). In terms of biological role, required for accurate and efficient protein synthesis under certain stress conditions. May act as a fidelity factor of the translation reaction, by catalyzing a one-codon backward translocation of tRNAs on improperly translocated ribosomes. Back-translocation proceeds from a post-translocation (POST) complex to a pre-translocation (PRE) complex, thus giving elongation factor G a second chance to translocate the tRNAs correctly. Binds to ribosomes in a GTP-dependent manner. The sequence is that of Elongation factor 4 from Streptomyces coelicolor (strain ATCC BAA-471 / A3(2) / M145).